The chain runs to 350 residues: C-X-C chemokine receptor type 1 (350 aa).

Residues 1–39 (MSNITDPQMWDFDDLNFTGMPPADEDYSPCMLETETLNK) are Extracellular-facing. Residues asparagine 3 and asparagine 16 are each glycosylated (N-linked (GlcNAc...) asparagine). The helical transmembrane segment at 40 to 66 (YVVIIAYALVFLLSLLGNSLVMLVILY) threads the bilayer. Topologically, residues 67-75 (SRVGRSVTD) are cytoplasmic. Residues 76 to 96 (VYLLNLALADLLFALTLPIWA) form a helical membrane-spanning segment. Topologically, residues 97 to 111 (ASKVNGWIFGTFLCK) are extracellular. Cysteines 110 and 187 form a disulfide. The chain crosses the membrane as a helical span at residues 112–133 (VVSLLKEVNFYSGILLLACISV). The Cytoplasmic portion of the chain corresponds to 134 to 154 (DRYLAIVHATRTLTQKRHLVK). A helical transmembrane segment spans residues 155–174 (FVCLGCWGLSMNLSLPFFLF). The Extracellular portion of the chain corresponds to 175-199 (RQAYHPNNSSPVCYEVLGNDTAKWR). Residues 200–220 (MVLRILPHTFGFIVPLFVMLF) form a helical membrane-spanning segment. Residues 221-242 (CYGFTLRTLFKAHMGQKHRAMR) are Cytoplasmic-facing. The helical transmembrane segment at 243 to 264 (VIFAVVLIFLLCWLPYNLVLLA) threads the bilayer. Residues 265-285 (DTLMRTQVIQESCERRNNIGR) are Extracellular-facing. Residues 286-308 (ALDATEILGFLHSCLNPIIYAFI) traverse the membrane as a helical segment. Topologically, residues 309 to 350 (GQNFRHGFLKILAMHGLVSKEFLARHRVTSYTSSSVNVSSNL) are cytoplasmic.

It belongs to the G-protein coupled receptor 1 family. As to quaternary structure, interacts with IL8. Interacts with GNAI2.

The protein localises to the cell membrane. Its function is as follows. Receptor to interleukin-8, which is a powerful neutrophils chemotactic factor. Binding of IL-8 to the receptor causes activation of neutrophils. This response is mediated via a G-protein that activates a phosphatidylinositol-calcium second messenger system. In Homo sapiens (Human), this protein is C-X-C chemokine receptor type 1 (CXCR1).